The primary structure comprises 918 residues: MAASVDNRQYGPLQPPLSGVVRSFKNGPNHRADSPVRGCNFPNSNVDYNNNRPLKSSVKIQEAAAEEMEDSCSEDENENEFRDLIVKGNRELEPSILDHRDEGTADNWIERNASMVRLTGKHPFNSEPPLNRLMHHGFITPVPLHYVRNHGVVPKAKWADWTVEVCGLVKRPAKFTMDQLLNEFRFREFPATLVCAGNRRKEQNMVKQSIGFNWGAAGVSTSVWRRVPLCDLLKRCGILSRKKGALNVCFEGAEDLPGGGGSKYGTSIKKELAMDPARDIILAYMQNGEQLAPDHGFPVRMIIPGFIGGRMVKWLKRIIVTTKESENYYHFKDNRVLPSHVDADVANAEAWWYKPEHIINELNINSVITTPCHEEILPINAWTTQRPYTLRGYSYSGGGKKVTRVEVTMDSGETWQVCTLDHPEKANKYGKYWCWCFWSLEVEVLDLLSAKEIAVRAWDETHNTQPEKLIWNLMGMMNNCWFRVKTNMCKPHKGEIGIVFEHPTQPGNQSGGWMDRERHLEISTESNQTLKKSVSTPFMNTASNTYTLSEVKKHNSPQSAWIIVHGHVYDCTRFLKDHPGGSDSILINAGTDCTEEFDAIHSDKAKKMLEDYRIGELITTGYASDSSSNSPNNSTHGASNFSHLAPIREAPVSRRVALAPNEKIPCKLISKTSISHDVRVFRFALPGGQDQALGLPVGKHIFICATVDGKLCMRAYTPTSSIDEMGFFELVVKVYFKGVHPKFPNGGIMSQYLDSMEVGSTLDVKGPLGHIEYTGRGNFMVHGKPRFARRLAMLAGGTGITPIYQVVQAILKDPEDETEMYVVYANRTEDDILLRDELDTWAKKNQRLKVWYVVQESIREGWEYSVGFITENILREHIPAAAEDTLALACGPPAMIQFAVQPNLEKMNYDTKNSLLVF.

The interval 25–44 (KNGPNHRADSPVRGCNFPNS) is disordered. A Mo-molybdopterin-binding site is contributed by Cys-195. Residues 543–618 (SNTYTLSEVK…LEDYRIGELI (76 aa)) form the Cytochrome b5 heme-binding domain. Heme-binding residues include His-578 and His-601. An FAD-binding FR-type domain is found at 661 to 774 (NEKIPCKLIS…KGPLGHIEYT (114 aa)). FAD contacts are provided by residues 714–717 (RAYT), 731–735 (VVKVY), Phe-736, Phe-743, 748–750 (IMS), and Thr-801.

This sequence belongs to the nitrate reductase family. Homodimer. It depends on FAD as a cofactor. Requires heme as cofactor. Mo-molybdopterin serves as cofactor.

It catalyses the reaction nitrite + NAD(+) + H2O = nitrate + NADH + H(+). Its function is as follows. Nitrate reductase is a key enzyme involved in the first step of nitrate assimilation in plants, fungi and bacteria. The chain is Nitrate reductase [NADH] from Cucurbita maxima (Pumpkin).